The primary structure comprises 317 residues: Mitochondrial outer membrane protein porin 4 (317 aa).

The segment at 1–30 is disordered; that stretch reads MEAETECKVPGVYSETGIPVEDPAPGLNSD.

This sequence belongs to the eukaryotic mitochondrial porin (TC 1.B.8.1) family.

Its subcellular location is the mitochondrion outer membrane. Functionally, forms a channel through the mitochondrial outer membrane that allows diffusion of small hydrophilic molecules. The channel adopts an open conformation at low or zero membrane potential and a closed conformation at potentials above 30-40 mV. The open state has a weak anion selectivity whereas the closed state is cation-selective. The polypeptide is Mitochondrial outer membrane protein porin 4 (VDAC4) (Oryza sativa subsp. japonica (Rice)).